Consider the following 655-residue polypeptide: T-lymphocyte surface antigen Ly-9 (655 aa).

Residues 1 to 47 (MVAPKSHTDDWAPGPFSSKPQRSQLQIFSSVLQTSLLFLLMGLRASG) form the signal peptide. The 111-residue stretch at 48–158 (KDSAPTVVSG…FVYEQLQEPQ (111 aa)) folds into the Ig-like V-type 1 domain. Topologically, residues 48 to 454 (KDSAPTVVSG…ICSGPERNTK (407 aa)) are extracellular. Residues Asn68, Asn95, Asn120, Asn169, and Asn173 are each glycosylated (N-linked (GlcNAc...) asparagine). The Ig-like C2-type 1 domain occupies 159-235 (VTMKSVKVSE…NPVSQRSSLP (77 aa)). 2 disulfide bridges follow: Cys172–Cys242 and Cys178–Cys222. The 113-residue stretch at 251 to 363 (GTTGETVVGV…LLIYRRLRKP (113 aa)) folds into the Ig-like V-type 2 domain. N-linked (GlcNAc...) asparagine glycans are attached at residues Asn285, Asn413, and Asn424. Residues 364–452 (KITWSLRHSE…ENICSGPERN (89 aa)) enclose the Ig-like C2-type 2 domain. Intrachain disulfides connect Cys377–Cys446 and Cys383–Cys427. Residues 455–476 (LWIGLFLMVCLLCVGIFSWCIW) traverse the membrane as a helical segment. Residues 477–655 (KRKGRCSVPA…PESPTYENFT (179 aa)) lie on the Cytoplasmic side of the membrane. The interval 521-556 (PLRPARQQPTPTSDSSSDSNLTTEEDEDRPEVHKPI) is disordered. Residues 530–542 (TPTSDSSSDSNLT) show a composition bias toward low complexity. 2 consecutive short sequence motifs (ITSM) follow at residues 601–606 (TMYAQV) and 624–629 (TIYCSI). The residue at position 603 (Tyr603) is a Phosphotyrosine. The tract at residues 633–655 (QVVPPPQQNDLEIPESPTYENFT) is disordered.

Interacts with SH2D1A, SH2D1B and INPP5D. Interacts (via phosphorylated cytoplasmic domain) with PTPN11; the interaction is blocked by SH2D1A. Increased surface expression on T-cells of systemic lupus erythematosus (SLE) patients.

The protein resides in the membrane. Its subcellular location is the cell membrane. In terms of biological role, self-ligand receptor of the signaling lymphocytic activation molecule (SLAM) family. SLAM receptors triggered by homo- or heterotypic cell-cell interactions are modulating the activation and differentiation of a wide variety of immune cells and thus are involved in the regulation and interconnection of both innate and adaptive immune response. Activities are controlled by presence or absence of small cytoplasmic adapter proteins, SH2D1A/SAP and/or SH2D1B/EAT-2. May participate in adhesion reactions between T lymphocytes and accessory cells by homophilic interaction. Promotes T-cell differentiation into a helper T-cell Th17 phenotype leading to increased IL-17 secretion; the costimulatory activity requires SH2D1A. Promotes recruitment of RORC to the IL-17 promoter. May be involved in the maintenance of peripheral cell tolerance by serving as a negative regulator of the immune response. May disable autoantibody responses and inhibit IFN-gamma secretion by CD4(+) T-cells. May negatively regulate the size of thymic innate CD8(+) T-cells and the development of invariant natural killer T (iNKT) cells. This is T-lymphocyte surface antigen Ly-9 (LY9) from Homo sapiens (Human).